A 2429-amino-acid polypeptide reads, in one-letter code: Reducing polyketide synthase ppsB (2429 aa).

One can recognise a Ketosynthase family 3 (KS3) domain in the interval Asp4 to Ser442. Catalysis depends on for beta-ketoacyl synthase activity residues Cys177, His317, and His362. The interval Val558–Glu873 is malonyl-CoA:ACP transacylase (MAT) domain. Ser652 serves as the catalytic For acyl/malonyl transferase activity. The N-terminal hotdog fold stretch occupies residues His945–Ala1075. A product template (PT) domain region spans residues His945 to Ser1227. The region spanning His945 to Ser1233 is the PKS/mFAS DH domain. The tract at residues Ser1090 to Ser1233 is C-terminal hotdog fold. The methyltransferase (CMeT) domain stretch occupies residues Leu1409–Ser2158. Residues Glu2350–Arg2425 form the Carrier domain. Ser2385 carries the O-(pantetheine 4'-phosphoryl)serine modification.

It functions in the pathway secondary metabolite biosynthesis. In terms of biological role, reducing polyketide synthase; part of the gene cluster that mediates the biosynthesis of 2,4'-dihydroxy-3'-methoxypropiophenone. The first step of the pathway is the conversion of acetate into acetyl-CoA by the acyl-CoA ligase ppsA. Acetyl-CoA is then used as a starter unit by the polyketide synthase ppsB and condensed with 4 malonyl-CoA unit to produce the pentaketide backbone. During polyketide extension, the polykedite chain is probably reduced and dehydrated by the KR and PT domains, respectively. O-methylation seems to be catalyzed by an unknown methyltransferase rather than by the CMeT domain of ppsB. Two hydroxylations and one further decarboxylation step catalyzed by yet unknown enzymes are then required to yield 4'-hydroxy-3'-methoxypropiophenone. PpsC functions as a carrier protein to transport 4'-hydroxy-3'-methoxypropiophenone to a specific cell compartment in which 4'-hydroxy-3'-methoxypropiophenone is hydroxylated to 2,4'-dihydroxy-3'-methoxypropiophenone by a still to be identified enzyme. This is Reducing polyketide synthase ppsB from Aspergillus oryzae (strain ATCC 42149 / RIB 40) (Yellow koji mold).